The following is an 86-amino-acid chain: Small ribosomal subunit protein bS20 (86 aa).

Belongs to the bacterial ribosomal protein bS20 family.

Its function is as follows. Binds directly to 16S ribosomal RNA. In Exiguobacterium sibiricum (strain DSM 17290 / CCUG 55495 / CIP 109462 / JCM 13490 / 255-15), this protein is Small ribosomal subunit protein bS20.